Here is a 340-residue protein sequence, read N- to C-terminus: uncharacterized protein (340 aa).

This is an uncharacterized protein from Enterobacteria phage T4 (Bacteriophage T4).